The chain runs to 96 residues: Evasin P1078 (96 aa).

An N-terminal signal peptide occupies residues 1–28; that stretch reads MAFNTITFLQWAVFVAILFNMNLHSASA. Disulfide bonds link cysteine 48-cysteine 67, cysteine 52-cysteine 69, and cysteine 63-cysteine 80. The N-linked (GlcNAc...) asparagine glycan is linked to asparagine 51. N-linked (GlcNAc...) asparagine glycosylation occurs at asparagine 74.

It localises to the secreted. Functionally, salivary chemokine-binding protein which binds to host chemokines CXCL1, CXCL2, CXCL3, CXCL5, CXCL6, CXCL11 and CXCL13. The protein is Evasin P1078 of Ixodes ricinus (Common tick).